The sequence spans 389 residues: Major outer membrane porin (389 aa).

This sequence belongs to the chlamydial porin (CP) (TC 1.B.2) family. In terms of assembly, part of a disulfide cross-linked outer membrane complex (COMC) composed of the major outer membrane porin (MOMP), the small cysteine-rich protein (OmcA) and the large cysteine-rich periplasmic protein (OmcB).

The protein resides in the cell outer membrane. Functionally, in elementary bodies (EBs, the infectious stage, which is able to survive outside the host cell) provides the structural integrity of the outer envelope through disulfide cross-links with the small cysteine-rich protein and the large cysteine-rich periplasmic protein. It has been described in publications as the Sarkosyl-insoluble COMC (Chlamydia outer membrane complex), and serves as the functional equivalent of peptidoglycan. In terms of biological role, permits diffusion of specific solutes through the outer membrane. This is Major outer membrane porin (ompA) from Chlamydia pneumoniae (Chlamydophila pneumoniae).